Consider the following 401-residue polypeptide: Formate-dependent phosphoribosylglycinamide formyltransferase (401 aa).

N(1)-(5-phospho-beta-D-ribosyl)glycinamide-binding positions include 22–23 and glutamate 82; that span reads EL. Residues arginine 115, lysine 157, 162–167, 197–200, and glutamate 205 contribute to the ATP site; these read SSGKGQ and EGFI. Residues 120–315 enclose the ATP-grasp domain; that stretch reads RLAAESLGLP…EFELHARAIL (196 aa). Mg(2+) is bound by residues glutamate 274 and glutamate 286. N(1)-(5-phospho-beta-D-ribosyl)glycinamide is bound by residues aspartate 293, lysine 362, and 369–370; that span reads RR.

Belongs to the PurK/PurT family. In terms of assembly, homodimer.

The catalysed reaction is N(1)-(5-phospho-beta-D-ribosyl)glycinamide + formate + ATP = N(2)-formyl-N(1)-(5-phospho-beta-D-ribosyl)glycinamide + ADP + phosphate + H(+). It participates in purine metabolism; IMP biosynthesis via de novo pathway; N(2)-formyl-N(1)-(5-phospho-D-ribosyl)glycinamide from N(1)-(5-phospho-D-ribosyl)glycinamide (formate route): step 1/1. In terms of biological role, involved in the de novo purine biosynthesis. Catalyzes the transfer of formate to 5-phospho-ribosyl-glycinamide (GAR), producing 5-phospho-ribosyl-N-formylglycinamide (FGAR). Formate is provided by PurU via hydrolysis of 10-formyl-tetrahydrofolate. This Cupriavidus necator (strain ATCC 17699 / DSM 428 / KCTC 22496 / NCIMB 10442 / H16 / Stanier 337) (Ralstonia eutropha) protein is Formate-dependent phosphoribosylglycinamide formyltransferase.